The sequence spans 241 residues: Aquaporin Z 1 (241 aa).

Residues 23–43 (AVFAAAFPELGIGFLGVAFAF) traverse the membrane as a helical segment. The short motif at 63–65 (NPA) is the NPA 1 element. 3 helical membrane passes run 85-105 (IVAQVLGAVVAAAALYVILTG), 129-149 (LLSALLIEIILTAFFLVVILG), and 156-176 (PVGFAPVAIGLALTLIHLISI). An NPA 2 motif is present at residues 184–186 (NPA). Residues 204–224 (WLFWLAPILGGAIGAVVWKIF) traverse the membrane as a helical segment.

This sequence belongs to the MIP/aquaporin (TC 1.A.8) family. As to quaternary structure, homotetramer.

The protein localises to the cell inner membrane. It carries out the reaction H2O(in) = H2O(out). Its function is as follows. Channel that permits osmotically driven movement of water in both directions. It is involved in the osmoregulation and in the maintenance of cell turgor during volume expansion in rapidly growing cells. It mediates rapid entry or exit of water in response to abrupt changes in osmolarity. This chain is Aquaporin Z 1, found in Agrobacterium fabrum (strain C58 / ATCC 33970) (Agrobacterium tumefaciens (strain C58)).